The primary structure comprises 81 residues: ATP synthase subunit c, chloroplastic (81 aa).

The next 2 membrane-spanning stretches (helical) occupy residues 7 to 27 and 57 to 77; these read AASVIAAGLAVGLASIGPGIG and LAFMEALTIYGLVVALALLFA.

The protein belongs to the ATPase C chain family. As to quaternary structure, F-type ATPases have 2 components, F(1) - the catalytic core - and F(0) - the membrane proton channel. F(1) has five subunits: alpha(3), beta(3), gamma(1), delta(1), epsilon(1). F(0) has four main subunits: a(1), b(1), b'(1) and c(10-14). The alpha and beta chains form an alternating ring which encloses part of the gamma chain. F(1) is attached to F(0) by a central stalk formed by the gamma and epsilon chains, while a peripheral stalk is formed by the delta, b and b' chains.

The protein localises to the plastid. It localises to the chloroplast thylakoid membrane. Its function is as follows. F(1)F(0) ATP synthase produces ATP from ADP in the presence of a proton or sodium gradient. F-type ATPases consist of two structural domains, F(1) containing the extramembraneous catalytic core and F(0) containing the membrane proton channel, linked together by a central stalk and a peripheral stalk. During catalysis, ATP synthesis in the catalytic domain of F(1) is coupled via a rotary mechanism of the central stalk subunits to proton translocation. In terms of biological role, key component of the F(0) channel; it plays a direct role in translocation across the membrane. A homomeric c-ring of between 10-14 subunits forms the central stalk rotor element with the F(1) delta and epsilon subunits. This chain is ATP synthase subunit c, chloroplastic, found in Pelargonium hortorum (Common geranium).